A 335-amino-acid chain; its full sequence is Photosystem II assembly lipoprotein Ycf48 (335 aa).

An N-terminal signal peptide occupies residues 1–23; it reads MSRLFSNLFNLLLIAAIGFGLSG. Cysteine 24 carries the N-palmitoyl cysteine lipid modification. The S-diacylglycerol cysteine moiety is linked to residue cysteine 24.

It belongs to the Ycf48 family. As to quaternary structure, part of early PSII assembly complexes which includes D1 (psbA) and PsbI; not found in mature PSII. Binds to the lumenal side of PSII complexes. Interacts with YidC.

The protein resides in the cellular thylakoid membrane. A factor required for optimal assembly of photosystem II (PSII), acting in the early stages of PSII assembly. Also plays a role in replacement of photodamaged D1 (psbA). Assists YidC in synthesis of chlorophyll-binding proteins. The protein is Photosystem II assembly lipoprotein Ycf48 of Prochlorococcus marinus (strain MIT 9313).